The sequence spans 737 residues: Phosphoribosylformylglycinamidine synthase subunit PurL (737 aa).

The active site involves H50. Y53 and K92 together coordinate ATP. A Mg(2+)-binding site is contributed by E94. Residues 95–98 and R117 each bind substrate; that span reads SHNH. H96 acts as the Proton acceptor in catalysis. D118 contributes to the Mg(2+) binding site. Q241 is a substrate binding site. D269 provides a ligand contact to Mg(2+). 313 to 315 provides a ligand contact to substrate; that stretch reads ESQ. Residues D495 and G532 each coordinate ATP. N533 is a Mg(2+) binding site. Residue S535 participates in substrate binding.

This sequence belongs to the FGAMS family. In terms of assembly, monomer. Part of the FGAM synthase complex composed of 1 PurL, 1 PurQ and 2 PurS subunits.

It localises to the cytoplasm. The enzyme catalyses N(2)-formyl-N(1)-(5-phospho-beta-D-ribosyl)glycinamide + L-glutamine + ATP + H2O = 2-formamido-N(1)-(5-O-phospho-beta-D-ribosyl)acetamidine + L-glutamate + ADP + phosphate + H(+). The protein operates within purine metabolism; IMP biosynthesis via de novo pathway; 5-amino-1-(5-phospho-D-ribosyl)imidazole from N(2)-formyl-N(1)-(5-phospho-D-ribosyl)glycinamide: step 1/2. Part of the phosphoribosylformylglycinamidine synthase complex involved in the purines biosynthetic pathway. Catalyzes the ATP-dependent conversion of formylglycinamide ribonucleotide (FGAR) and glutamine to yield formylglycinamidine ribonucleotide (FGAM) and glutamate. The FGAM synthase complex is composed of three subunits. PurQ produces an ammonia molecule by converting glutamine to glutamate. PurL transfers the ammonia molecule to FGAR to form FGAM in an ATP-dependent manner. PurS interacts with PurQ and PurL and is thought to assist in the transfer of the ammonia molecule from PurQ to PurL. The protein is Phosphoribosylformylglycinamidine synthase subunit PurL of Bartonella bacilliformis (strain ATCC 35685 / KC583 / Herrer 020/F12,63).